Reading from the N-terminus, the 514-residue chain is Flagellin B (514 aa).

Belongs to the bacterial flagellin family. Heteromer of FlaA and FlaB. FlaB is located proximal to the hook while the remainder of the filament is composed of the predominant FlaA.

Its subcellular location is the secreted. It localises to the bacterial flagellum. Flagellin is the subunit protein which polymerizes to form the filaments of bacterial flagella. Important for motility and virulence. This is Flagellin B (flaB) from Helicobacter pylori (strain ATCC 700392 / 26695) (Campylobacter pylori).